A 334-amino-acid chain; its full sequence is Biotin synthase (334 aa).

One can recognise a Radical SAM core domain in the interval 48-275 (NQVQTSQLLS…RSMVRLSAGR (228 aa)). 3 residues coordinate [4Fe-4S] cluster: C63, C67, and C70. Residues C107, C138, C198, and R270 each contribute to the [2Fe-2S] cluster site.

Belongs to the radical SAM superfamily. Biotin synthase family. In terms of assembly, homodimer. Requires [4Fe-4S] cluster as cofactor. The cofactor is [2Fe-2S] cluster.

The enzyme catalyses (4R,5S)-dethiobiotin + (sulfur carrier)-SH + 2 reduced [2Fe-2S]-[ferredoxin] + 2 S-adenosyl-L-methionine = (sulfur carrier)-H + biotin + 2 5'-deoxyadenosine + 2 L-methionine + 2 oxidized [2Fe-2S]-[ferredoxin]. Its pathway is cofactor biosynthesis; biotin biosynthesis; biotin from 7,8-diaminononanoate: step 2/2. In terms of biological role, catalyzes the conversion of dethiobiotin (DTB) to biotin by the insertion of a sulfur atom into dethiobiotin via a radical-based mechanism. This is Biotin synthase from Maricaulis maris (strain MCS10) (Caulobacter maris).